The chain runs to 68 residues: Probable tautomerase HP_0924 (68 aa).

Pro-2 serves as the catalytic Proton acceptor; via imino nitrogen.

This sequence belongs to the 4-oxalocrotonate tautomerase family.

In Helicobacter pylori (strain ATCC 700392 / 26695) (Campylobacter pylori), this protein is Probable tautomerase HP_0924.